The primary structure comprises 89 residues: Small ribosomal subunit protein uS15 (89 aa).

The protein belongs to the universal ribosomal protein uS15 family. In terms of assembly, part of the 30S ribosomal subunit. Forms a bridge to the 50S subunit in the 70S ribosome, contacting the 23S rRNA.

Functionally, one of the primary rRNA binding proteins, it binds directly to 16S rRNA where it helps nucleate assembly of the platform of the 30S subunit by binding and bridging several RNA helices of the 16S rRNA. In terms of biological role, forms an intersubunit bridge (bridge B4) with the 23S rRNA of the 50S subunit in the ribosome. This is Small ribosomal subunit protein uS15 from Mesorhizobium japonicum (strain LMG 29417 / CECT 9101 / MAFF 303099) (Mesorhizobium loti (strain MAFF 303099)).